The chain runs to 161 residues: Phosphopantetheine adenylyltransferase (161 aa).

T11 provides a ligand contact to substrate. ATP-binding positions include 11-12 (TF) and H19. The substrate site is built by K43, T75, and R89. ATP contacts are provided by residues 90–92 (GLR), E100, and 125–131 (YSFLSSS).

Belongs to the bacterial CoaD family. As to quaternary structure, homohexamer. Mg(2+) serves as cofactor.

It localises to the cytoplasm. The catalysed reaction is (R)-4'-phosphopantetheine + ATP + H(+) = 3'-dephospho-CoA + diphosphate. The protein operates within cofactor biosynthesis; coenzyme A biosynthesis; CoA from (R)-pantothenate: step 4/5. Its function is as follows. Reversibly transfers an adenylyl group from ATP to 4'-phosphopantetheine, yielding dephospho-CoA (dPCoA) and pyrophosphate. This Listeria welshimeri serovar 6b (strain ATCC 35897 / DSM 20650 / CCUG 15529 / CIP 8149 / NCTC 11857 / SLCC 5334 / V8) protein is Phosphopantetheine adenylyltransferase.